The following is a 436-amino-acid chain: tRNA-2-methylthio-N(6)-dimethylallyladenosine synthase (436 aa).

One can recognise an MTTase N-terminal domain in the interval 5–120 (KKLFIQTLGC…IKDVVDVKGA (116 aa)). [4Fe-4S] cluster contacts are provided by C14, C51, C83, C152, C156, and C159. Positions 138 to 372 (KTNKYRASVN…IELHKRYLEE (235 aa)) constitute a Radical SAM core domain. In terms of domain architecture, TRAM spans 375 to 436 (PKLIGETLNI…RTSLKGEVVN (62 aa)).

It belongs to the methylthiotransferase family. MiaB subfamily. Monomer. It depends on [4Fe-4S] cluster as a cofactor.

The protein localises to the cytoplasm. It carries out the reaction N(6)-dimethylallyladenosine(37) in tRNA + (sulfur carrier)-SH + AH2 + 2 S-adenosyl-L-methionine = 2-methylsulfanyl-N(6)-dimethylallyladenosine(37) in tRNA + (sulfur carrier)-H + 5'-deoxyadenosine + L-methionine + A + S-adenosyl-L-homocysteine + 2 H(+). In terms of biological role, catalyzes the methylthiolation of N6-(dimethylallyl)adenosine (i(6)A), leading to the formation of 2-methylthio-N6-(dimethylallyl)adenosine (ms(2)i(6)A) at position 37 in tRNAs that read codons beginning with uridine. The chain is tRNA-2-methylthio-N(6)-dimethylallyladenosine synthase from Aliarcobacter butzleri (strain RM4018) (Arcobacter butzleri).